We begin with the raw amino-acid sequence, 360 residues long: DNA primase large subunit PriL (360 aa).

Cys237, Cys309, Cys318, and Cys325 together coordinate [4Fe-4S] cluster. Residues 340 to 360 (DDGDDDDLADWRDREDDDSPD) are disordered.

Belongs to the eukaryotic-type primase large subunit family. Heterodimer of a small subunit (PriS) and a large subunit (PriL). [4Fe-4S] cluster serves as cofactor.

In terms of biological role, regulatory subunit of DNA primase, an RNA polymerase that catalyzes the synthesis of short RNA molecules used as primers for DNA polymerase during DNA replication. Stabilizes and modulates the activity of the small subunit, increasing the rate of DNA synthesis, and conferring RNA synthesis capability. The DNA polymerase activity may enable DNA primase to also catalyze primer extension after primer synthesis. May also play a role in DNA repair. The chain is DNA primase large subunit PriL from Halobacterium salinarum (strain ATCC 29341 / DSM 671 / R1).